The following is a 218-amino-acid chain: Protein-methionine-sulfoxide reductase heme-binding subunit MsrQ (218 aa).

5 consecutive transmembrane segments (helical) span residues 12–32 (TLIK…LALF), 82–102 (MLGL…LWFD), 118–138 (PFIT…ITST), 150–170 (WQWL…HYWW), and 180–200 (QPII…FWAW).

It belongs to the MsrQ family. Heterodimer of a catalytic subunit (MsrP) and a heme-binding subunit (MsrQ). It depends on FMN as a cofactor. Requires heme b as cofactor.

The protein resides in the cell inner membrane. Its function is as follows. Part of the MsrPQ system that repairs oxidized periplasmic proteins containing methionine sulfoxide residues (Met-O), using respiratory chain electrons. Thus protects these proteins from oxidative-stress damage caused by reactive species of oxygen and chlorine generated by the host defense mechanisms. MsrPQ is essential for the maintenance of envelope integrity under bleach stress, rescuing a wide series of structurally unrelated periplasmic proteins from methionine oxidation. MsrQ provides electrons for reduction to the reductase catalytic subunit MsrP, using the quinone pool of the respiratory chain. The chain is Protein-methionine-sulfoxide reductase heme-binding subunit MsrQ from Herminiimonas arsenicoxydans.